We begin with the raw amino-acid sequence, 548 residues long: Spindle pole body-associated protein cut12 (548 aa).

The segment at 122–325 (FKSPLLQSTP…GQQSKYKGKE (204 aa)) is interaction with plo1. The disordered stretch occupies residues 123 to 182 (KSPLLQSTPKPNINNPDNENKSKHDEFDNRYNININESYKNETKSNQRLGEDVPSKKKYP). A compositionally biased stretch (polar residues) spans 126–139 (LLQSTPKPNINNPD). 2 stretches are compositionally biased toward basic and acidic residues: residues 140-151 (NENKSKHDEFDN) and 161-182 (YKNE…KKYP). Residues 261–312 (KQKFSMLDSAHSDLELELTSIRERLESLILEKQEEINFWKQRCRALETEKIH) adopt a coiled-coil conformation. Positions 344 to 356 (PITTKVVSRPSQS) are enriched in polar residues. 2 disordered regions span residues 344–369 (PITT…PSKN) and 510–548 (SRVD…QLNS). The stretch at 522-548 (RTANAKKRLEERRRRRKLKLQELQLNS) forms a coiled coil.

Self-associates. Interacts with plo1.

Its subcellular location is the cytoplasm. The protein localises to the cytoskeleton. It localises to the microtubule organizing center. The protein resides in the spindle pole body. Functionally, required for bipolar spindle formation. May act as a regulator of the p34cdc2/cyclin B kinase. Required for full activation of the plo1 kinase. However, in cut12.1 cells at restrictive temperature the H1 kinase does rise concomitant with entry into mitosis, indicating that cut12 is not required for activation of p34cdc2/cyclin B. The cut12.s11 allele may promote cdc2-independent phosphorylation of SPB proteins thereby overcoming the requirement for cdc25 in cell cycle progression. This chain is Spindle pole body-associated protein cut12 (cut12), found in Schizosaccharomyces pombe (strain 972 / ATCC 24843) (Fission yeast).